The following is a 335-amino-acid chain: Spliceosome-associated protein 49 (335 aa).

2 RRM domains span residues 13–84 and 101–172; these read IYLG…PIRV and LFVG…PITV. Residues 204-223 form a disordered region; it reads VTPQSTLPPGFSPATPAPTS.

Belongs to the SF3B4 family.

It is found in the nucleus. This is Spliceosome-associated protein 49 (sap49) from Schizosaccharomyces pombe (strain 972 / ATCC 24843) (Fission yeast).